A 215-amino-acid polypeptide reads, in one-letter code: Cytokinin riboside 5'-monophosphate phosphoribohydrolase LOG3 (215 aa).

Substrate contacts are provided by residues glutamate 84, 102-103, 119-125, and threonine 131; these read RK and GYGTLEE.

The protein belongs to the LOG family. In terms of tissue distribution, expressed in roots and shoots. Detected in root procambium, lateral root primordia, vascular tissues of immature leaves, axillary buds, style and ovular funiculus.

The protein resides in the cytoplasm. It localises to the nucleus. It carries out the reaction N(6)-(dimethylallyl)adenosine 5'-phosphate + H2O = N(6)-dimethylallyladenine + D-ribose 5-phosphate. The enzyme catalyses 9-ribosyl-trans-zeatin 5'-phosphate + H2O = trans-zeatin + D-ribose 5-phosphate. In terms of biological role, cytokinin-activating enzyme working in the direct activation pathway. Phosphoribohydrolase that converts inactive cytokinin nucleotides to the biologically active free-base forms. The protein is Cytokinin riboside 5'-monophosphate phosphoribohydrolase LOG3 (LOG3) of Arabidopsis thaliana (Mouse-ear cress).